We begin with the raw amino-acid sequence, 239 residues long: Fatty acid metabolism regulator protein (239 aa).

One can recognise an HTH gntR-type domain in the interval 6 to 74 (KGPASFAEKY…HGKPTQVNNF (69 aa)). The segment at residues 34 to 53 (ERELSELIGVTRTTLREVLQ) is a DNA-binding region (H-T-H motif).

Homodimer.

The protein localises to the cytoplasm. Its function is as follows. Multifunctional regulator of fatty acid metabolism. The protein is Fatty acid metabolism regulator protein of Shewanella frigidimarina (strain NCIMB 400).